The following is a 177-amino-acid chain: Probable DNA-directed RNA polymerase subunit delta (177 aa).

The region spanning 14 to 81 is the HTH HARE-type domain; the sequence is CSMIEVVHSV…GENRWGLRSW (68 aa). A disordered region spans residues 90–177; it reads EILPQPKPKK…ETEEEEEEEL (88 aa). The segment covering 106–177 has biased composition (acidic residues); the sequence is DGFDDYIEED…ETEEEEEEEL (72 aa).

Belongs to the RpoE family. In terms of assembly, RNAP is composed of a core of 2 alpha, a beta and a beta' subunits. The core is associated with a delta subunit and one of several sigma factors.

Participates in both the initiation and recycling phases of transcription. In the presence of the delta subunit, RNAP displays an increased specificity of transcription, a decreased affinity for nucleic acids, and an increased efficiency of RNA synthesis because of enhanced recycling. This Bacillus cereus (strain B4264) protein is Probable DNA-directed RNA polymerase subunit delta.